Reading from the N-terminus, the 262-residue chain is Putative hydro-lyase Sca_2211 (262 aa).

This sequence belongs to the D-glutamate cyclase family.

The chain is Putative hydro-lyase Sca_2211 from Staphylococcus carnosus (strain TM300).